Here is a 320-residue protein sequence, read N- to C-terminus: o-succinylbenzoate synthase (320 aa).

Lys133 functions as the Proton donor in the catalytic mechanism. Residues Asp161, Glu190, and Asp213 each coordinate Mg(2+). Catalysis depends on Lys235, which acts as the Proton acceptor.

Belongs to the mandelate racemase/muconate lactonizing enzyme family. MenC type 1 subfamily. A divalent metal cation serves as cofactor.

The enzyme catalyses (1R,6R)-6-hydroxy-2-succinyl-cyclohexa-2,4-diene-1-carboxylate = 2-succinylbenzoate + H2O. The protein operates within quinol/quinone metabolism; 1,4-dihydroxy-2-naphthoate biosynthesis; 1,4-dihydroxy-2-naphthoate from chorismate: step 4/7. Its pathway is quinol/quinone metabolism; menaquinone biosynthesis. Its function is as follows. Converts 2-succinyl-6-hydroxy-2,4-cyclohexadiene-1-carboxylate (SHCHC) to 2-succinylbenzoate (OSB). This chain is o-succinylbenzoate synthase, found in Salmonella agona (strain SL483).